The sequence spans 296 residues: tRNA pseudouridine synthase B (296 aa).

Asp38 serves as the catalytic Nucleophile.

This sequence belongs to the pseudouridine synthase TruB family. Type 1 subfamily.

It catalyses the reaction uridine(55) in tRNA = pseudouridine(55) in tRNA. Responsible for synthesis of pseudouridine from uracil-55 in the psi GC loop of transfer RNAs. In Ehrlichia chaffeensis (strain ATCC CRL-10679 / Arkansas), this protein is tRNA pseudouridine synthase B.